A 542-amino-acid chain; its full sequence is Serine/threonine-protein phosphatase 2A regulatory subunit pptr-1 (542 aa).

2 disordered regions span residues 1-28 (MHGS…TGGQ) and 500-542 (DYLK…PAKK). The span at 528-542 (KKSSTGSETTTPAKK) shows a compositional bias: polar residues.

It belongs to the phosphatase 2A regulatory subunit B56 family. Part of a complex consisting of a common heterodimeric core enzyme, composed of catalytic subunit let-92 and constant regulatory subunit paa-1, that associates with a variety of regulatory subunits which confer distinct properties to the holoenzyme. Interacts with akt-1 but not akt-2. Interacts with sgk-1. Interacts with P granule components meg-1, meg-3 and meg-4. In terms of tissue distribution, expressed in pharynx, vulva and spermatheca.

The protein resides in the cytoplasm. In terms of biological role, probable regulatory subunit of serine/threonine-protein phosphatase let-92 which negatively regulates the insulin receptor signaling cascade composed of daf-2, age-1, akt-1, akt-2 and sgk-1 by promoting the dephosphorylation of akt-1 on 'Thr-350'. Negatively regulates several functions controlled by the insulin pathway including dauer formation, lifespan, fat storage and stress resistance. Plays a role in the asymmetric segregation of the P granule components during embryonic cell divisions but does not play an essential role in specifying germ cell fate. Within a PP2A phosphatase complex, acts redundantly with pptr-2, to dephosphorylate P granule components including meg-1 and meg-3 to promote the assembly and accumulation of zygotic P granules in the posterior cytoplasm during zygote polarization, and thus maintain P granule distribution and segregation in early stage embryos following meiosis. In adults, required to promote germ cell proliferation and differentiation when exposed to thermic stress. The chain is Serine/threonine-protein phosphatase 2A regulatory subunit pptr-1 from Caenorhabditis elegans.